The chain runs to 531 residues: Peptide chain release factor 3 (531 aa).

The tr-type G domain maps to 13 to 282 (AKRRTFAIIS…TLIKYAPPPK (270 aa)). GTP is bound by residues 22–29 (SHPDAGKT), 90–94 (DTPGH), and 144–147 (NKLD).

This sequence belongs to the TRAFAC class translation factor GTPase superfamily. Classic translation factor GTPase family. PrfC subfamily.

The protein resides in the cytoplasm. In terms of biological role, increases the formation of ribosomal termination complexes and stimulates activities of RF-1 and RF-2. It binds guanine nucleotides and has strong preference for UGA stop codons. It may interact directly with the ribosome. The stimulation of RF-1 and RF-2 is significantly reduced by GTP and GDP, but not by GMP. The chain is Peptide chain release factor 3 from Psychrobacter cryohalolentis (strain ATCC BAA-1226 / DSM 17306 / VKM B-2378 / K5).